A 122-amino-acid chain; its full sequence is MYRYEISCPFNLRSPAVPVSSKASSTSFIKTKALRISEVNRELSVPRVYREKSFTRRLNAPIFGSLFVDKESRFANPYSFTLNQGLTRGRGKQAKLAPDRRGKSVVTEVDYRTGVGENIVKD.

Its subcellular location is the mitochondrion. This is an uncharacterized protein from Arabidopsis thaliana (Mouse-ear cress).